The chain runs to 362 residues: Chorismate synthase (362 aa).

R47 is a binding site for NADP(+). Residues 124 to 126 (RSS), G286, 301 to 305 (KPTAT), and R327 contribute to the FMN site.

The protein belongs to the chorismate synthase family. Homotetramer. FMNH2 serves as cofactor.

It catalyses the reaction 5-O-(1-carboxyvinyl)-3-phosphoshikimate = chorismate + phosphate. The protein operates within metabolic intermediate biosynthesis; chorismate biosynthesis; chorismate from D-erythrose 4-phosphate and phosphoenolpyruvate: step 7/7. Catalyzes the anti-1,4-elimination of the C-3 phosphate and the C-6 proR hydrogen from 5-enolpyruvylshikimate-3-phosphate (EPSP) to yield chorismate, which is the branch point compound that serves as the starting substrate for the three terminal pathways of aromatic amino acid biosynthesis. This reaction introduces a second double bond into the aromatic ring system. This Synechocystis sp. (strain ATCC 27184 / PCC 6803 / Kazusa) protein is Chorismate synthase.